Consider the following 603-residue polypeptide: uncharacterized protein (603 aa).

A disordered region spans residues 257 to 281 (AGEAASSDHDQKISRVTRKRPREPK).

This is an uncharacterized protein from Saccharomyces cerevisiae (strain ATCC 204508 / S288c) (Baker's yeast).